The following is a 471-amino-acid chain: Eukaryotic translation initiation factor 3 subunit M (471 aa).

A disordered region spans residues 39-61; the sequence is EISSLLEPLRQQEQSEEEPDRKQ. The region spanning 206–377 is the PCI domain; sequence DFELAQSHVV…SEFLVHRATY (172 aa). The disordered stretch occupies residues 419–471; it reads QAATEEANQGKSGEKGGKGGDRRRNPQHQQQQQQSQPSQPQQPRETELVAGAE. The segment covering 430–442 has biased composition (basic and acidic residues); the sequence is SGEKGGKGGDRRR. Low complexity predominate over residues 445–461; that stretch reads QHQQQQQQSQPSQPQQP.

It belongs to the eIF-3 subunit M family. Component of the eukaryotic translation initiation factor 3 (eIF-3) complex.

It localises to the cytoplasm. Functionally, component of the eukaryotic translation initiation factor 3 (eIF-3) complex, which is involved in protein synthesis of a specialized repertoire of mRNAs and, together with other initiation factors, stimulates binding of mRNA and methionyl-tRNAi to the 40S ribosome. The eIF-3 complex specifically targets and initiates translation of a subset of mRNAs involved in cell proliferation. In Aspergillus clavatus (strain ATCC 1007 / CBS 513.65 / DSM 816 / NCTC 3887 / NRRL 1 / QM 1276 / 107), this protein is Eukaryotic translation initiation factor 3 subunit M.